The following is a 404-amino-acid chain: Probable ketol-acid reductoisomerase, mitochondrial (404 aa).

The 191-residue stretch at 63–253 (TKENVWERSD…AVGSGFIYQT (191 aa)) folds into the KARI N-terminal Rossmann domain. NADP(+)-binding positions include 91 to 100 (GYGSQGHGQG), 115 to 120 (RKDGAS), and 153 to 157 (SDAAQ). Residue histidine 178 is part of the active site. The KARI C-terminal knotted domain maps to 254–401 (TFKKEVISDL…EVVRSLRPEH (148 aa)). Phosphoserine is present on serine 261. Aspartate 262, glutamate 266, glutamate 298, and glutamate 302 together coordinate Mg(2+). Serine 324 contacts substrate.

This sequence belongs to the ketol-acid reductoisomerase family. Requires Mg(2+) as cofactor.

The protein resides in the mitochondrion. The enzyme catalyses (2R)-2,3-dihydroxy-3-methylbutanoate + NADP(+) = (2S)-2-acetolactate + NADPH + H(+). It catalyses the reaction (2R,3R)-2,3-dihydroxy-3-methylpentanoate + NADP(+) = (S)-2-ethyl-2-hydroxy-3-oxobutanoate + NADPH + H(+). Its pathway is amino-acid biosynthesis; L-isoleucine biosynthesis; L-isoleucine from 2-oxobutanoate: step 2/4. The protein operates within amino-acid biosynthesis; L-valine biosynthesis; L-valine from pyruvate: step 2/4. This is Probable ketol-acid reductoisomerase, mitochondrial (ilv5) from Schizosaccharomyces pombe (strain 972 / ATCC 24843) (Fission yeast).